The primary structure comprises 390 residues: Formate-dependent phosphoribosylglycinamide formyltransferase (390 aa).

N(1)-(5-phospho-beta-D-ribosyl)glycinamide is bound by residues 19-20 (EL) and Glu79. ATP-binding positions include Arg111, Lys152, 157–162 (SSGKGQ), 192–195 (EGFV), and Glu200. The 190-residue stretch at 116-305 (RLAAEELGLP…EFAIHARAIL (190 aa)) folds into the ATP-grasp domain. Glu264 and Glu276 together coordinate Mg(2+). N(1)-(5-phospho-beta-D-ribosyl)glycinamide-binding positions include Asp283, Lys353, and 360–361 (RR).

It belongs to the PurK/PurT family. Homodimer.

The catalysed reaction is N(1)-(5-phospho-beta-D-ribosyl)glycinamide + formate + ATP = N(2)-formyl-N(1)-(5-phospho-beta-D-ribosyl)glycinamide + ADP + phosphate + H(+). It functions in the pathway purine metabolism; IMP biosynthesis via de novo pathway; N(2)-formyl-N(1)-(5-phospho-D-ribosyl)glycinamide from N(1)-(5-phospho-D-ribosyl)glycinamide (formate route): step 1/1. Involved in the de novo purine biosynthesis. Catalyzes the transfer of formate to 5-phospho-ribosyl-glycinamide (GAR), producing 5-phospho-ribosyl-N-formylglycinamide (FGAR). Formate is provided by PurU via hydrolysis of 10-formyl-tetrahydrofolate. The sequence is that of Formate-dependent phosphoribosylglycinamide formyltransferase from Marinobacter nauticus (strain ATCC 700491 / DSM 11845 / VT8) (Marinobacter aquaeolei).